The primary structure comprises 185 residues: ATP-dependent protease subunit HslV (185 aa).

Threonine 12 is an active-site residue. Na(+) contacts are provided by alanine 168, cysteine 171, and threonine 174.

It belongs to the peptidase T1B family. HslV subfamily. A double ring-shaped homohexamer of HslV is capped on each side by a ring-shaped HslU homohexamer. The assembly of the HslU/HslV complex is dependent on binding of ATP.

It localises to the cytoplasm. It catalyses the reaction ATP-dependent cleavage of peptide bonds with broad specificity.. Its activity is regulated as follows. Allosterically activated by HslU binding. Protease subunit of a proteasome-like degradation complex believed to be a general protein degrading machinery. The polypeptide is ATP-dependent protease subunit HslV (Cereibacter sphaeroides (strain ATCC 17025 / ATH 2.4.3) (Rhodobacter sphaeroides)).